Reading from the N-terminus, the 373-residue chain is UDP-N-acetylenolpyruvoylglucosamine reductase (373 aa).

In terms of domain architecture, FAD-binding PCMH-type spans 30-203 (LACMADSVVT…SRVGFRLHTD (174 aa)). The active site involves Arg-180. Ser-258 acts as the Proton donor in catalysis. Glu-356 is a catalytic residue.

This sequence belongs to the MurB family. Requires FAD as cofactor.

The protein localises to the cytoplasm. It carries out the reaction UDP-N-acetyl-alpha-D-muramate + NADP(+) = UDP-N-acetyl-3-O-(1-carboxyvinyl)-alpha-D-glucosamine + NADPH + H(+). The protein operates within cell wall biogenesis; peptidoglycan biosynthesis. Cell wall formation. This chain is UDP-N-acetylenolpyruvoylglucosamine reductase, found in Psychrobacter cryohalolentis (strain ATCC BAA-1226 / DSM 17306 / VKM B-2378 / K5).